Consider the following 149-residue polypeptide: Transcription antitermination protein NusB (149 aa).

Belongs to the NusB family.

Involved in transcription antitermination. Required for transcription of ribosomal RNA (rRNA) genes. Binds specifically to the boxA antiterminator sequence of the ribosomal RNA (rrn) operons. This is Transcription antitermination protein NusB from Hahella chejuensis (strain KCTC 2396).